The following is a 345-amino-acid chain: Dihydroorotate dehydrogenase (quinone) (345 aa).

Residues 65–69 (AGLDK) and Thr89 contribute to the FMN site. Lys69 lines the substrate pocket. 114-118 (NRMGF) serves as a coordination point for substrate. Asn142 and Asn175 together coordinate FMN. Asn175 serves as a coordination point for substrate. Ser178 serves as the catalytic Nucleophile. Position 180 (Asn180) interacts with substrate. Residues Lys220 and Thr248 each contribute to the FMN site. A substrate-binding site is contributed by 249–250 (NT). Residues Gly271, Gly300, and 321-322 (YT) contribute to the FMN site.

The protein belongs to the dihydroorotate dehydrogenase family. Type 2 subfamily. As to quaternary structure, monomer. FMN is required as a cofactor.

It localises to the cell membrane. The catalysed reaction is (S)-dihydroorotate + a quinone = orotate + a quinol. The protein operates within pyrimidine metabolism; UMP biosynthesis via de novo pathway; orotate from (S)-dihydroorotate (quinone route): step 1/1. In terms of biological role, catalyzes the conversion of dihydroorotate to orotate with quinone as electron acceptor. This is Dihydroorotate dehydrogenase (quinone) from Burkholderia cenocepacia (strain HI2424).